The sequence spans 416 residues: Polyadenylation and cleavage factor homolog 1 (416 aa).

A compositionally biased stretch (polar residues) spans 1 to 17 (MASNGSFSAQRNANART). A disordered region spans residues 1-80 (MASNGSFSAQ…NNNNVSRVSS (80 aa)). Positions 70 to 80 (SNNNNVSRVSS) are enriched in low complexity. Positions 199-220 (KELTDLLSLLNNEKEKKTLEAS) form a coiled coil. The C2H2-type zinc-finger motif lies at 254–276 (RQCSSCGLRFKCQEEHSKHMDWH).

In terms of assembly, forms a complex with cleavage and polyadenylation specificity factor (CPSF) subunits CLPS3, CLPS5, CPSF30, PCFS4, PCFS5, CSTF77 and FIPS3.

Its subcellular location is the nucleus. This Arabidopsis thaliana (Mouse-ear cress) protein is Polyadenylation and cleavage factor homolog 1.